Consider the following 263-residue polypeptide: 4-hydroxy-tetrahydrodipicolinate reductase (263 aa).

Residues 8-13 (GACGKM), Asp-34, 97-99 (GTT), and 123-126 (APNF) contribute to the NAD(+) site. The active-site Proton donor/acceptor is His-153. A (S)-2,3,4,5-tetrahydrodipicolinate-binding site is contributed by His-154. Catalysis depends on Lys-157, which acts as the Proton donor. Residue 163-164 (GT) coordinates (S)-2,3,4,5-tetrahydrodipicolinate.

This sequence belongs to the DapB family.

The protein resides in the cytoplasm. The catalysed reaction is (S)-2,3,4,5-tetrahydrodipicolinate + NAD(+) + H2O = (2S,4S)-4-hydroxy-2,3,4,5-tetrahydrodipicolinate + NADH + H(+). The enzyme catalyses (S)-2,3,4,5-tetrahydrodipicolinate + NADP(+) + H2O = (2S,4S)-4-hydroxy-2,3,4,5-tetrahydrodipicolinate + NADPH + H(+). Its pathway is amino-acid biosynthesis; L-lysine biosynthesis via DAP pathway; (S)-tetrahydrodipicolinate from L-aspartate: step 4/4. Functionally, catalyzes the conversion of 4-hydroxy-tetrahydrodipicolinate (HTPA) to tetrahydrodipicolinate. The chain is 4-hydroxy-tetrahydrodipicolinate reductase from Carboxydothermus hydrogenoformans (strain ATCC BAA-161 / DSM 6008 / Z-2901).